The following is a 485-amino-acid chain: MDNKLDIKAFLDKDEQKDLLRLLTAGSVDDGKSTLIGRLLFDSKKLYEDQLDALERDSKRVGNAGEHIDYALLLDGLKAEREQGITIDVAYRYFSTNGRKFIIADTPGHEQYTRNMITGGSTANLAIILVDARTGVITQTRRHTFLVSLLGIKHVVLAVNKMDLVDFSEERFDEIVSEYKKFVEPLGIPDVNCIPLSALDGDNVVDKSERTPWYKGISLLDFLETVHIDNDHNFTDFRFPVQYVLRPNLDFRGFCGKVASGIVRKGDTVMALPSGKTSKVKSIVTYDGELDYAFPPQSVTLTLEDEIDVSRGEMLVHPDNLPIVDRNFEAMMVWMDEEPMDINKSFFIKQTTNLSRTRIDAIKYKVDVNTMEHLSIDNGQLTKDNLPLQLNQIARVVLTTAKELFFDPYKKNKSCGSFILIDPITNNTSAVGMIIDRVEMKDMAATDDIPVLDLSKLDIAPEHHAAIEKVVKELERQGLSIKVIK.

The tr-type G domain maps to 17 to 232 (KDLLRLLTAG…LETVHIDNDH (216 aa)). Residues 26–33 (GSVDDGKS) form a G1 region. 26-33 (GSVDDGKS) lines the GTP pocket. The segment at 84-88 (GITID) is G2. A G3 region spans residues 105-108 (DTPG). Residues 105 to 109 (DTPGH) and 160 to 163 (NKMD) each bind GTP. The G4 stretch occupies residues 160-163 (NKMD). Positions 197–199 (SAL) are G5.

Belongs to the TRAFAC class translation factor GTPase superfamily. Classic translation factor GTPase family. CysN/NodQ subfamily. In terms of assembly, heterodimer composed of CysD, the smaller subunit, and CysN.

The catalysed reaction is sulfate + ATP + H(+) = adenosine 5'-phosphosulfate + diphosphate. The protein operates within sulfur metabolism; hydrogen sulfide biosynthesis; sulfite from sulfate: step 1/3. Functionally, with CysD forms the ATP sulfurylase (ATPS) that catalyzes the adenylation of sulfate producing adenosine 5'-phosphosulfate (APS) and diphosphate, the first enzymatic step in sulfur assimilation pathway. APS synthesis involves the formation of a high-energy phosphoric-sulfuric acid anhydride bond driven by GTP hydrolysis by CysN coupled to ATP hydrolysis by CysD. The chain is Sulfate adenylyltransferase subunit 1 from Bacteroides thetaiotaomicron (strain ATCC 29148 / DSM 2079 / JCM 5827 / CCUG 10774 / NCTC 10582 / VPI-5482 / E50).